Consider the following 423-residue polypeptide: Histidine--tRNA ligase (423 aa).

It belongs to the class-II aminoacyl-tRNA synthetase family. In terms of assembly, homodimer.

The protein resides in the cytoplasm. It carries out the reaction tRNA(His) + L-histidine + ATP = L-histidyl-tRNA(His) + AMP + diphosphate + H(+). This Haemophilus influenzae (strain ATCC 51907 / DSM 11121 / KW20 / Rd) protein is Histidine--tRNA ligase (hisS).